Here is a 317-residue protein sequence, read N- to C-terminus: Beta-ketoacyl-[acyl-carrier-protein] synthase III (317 aa).

Residues C112 and H244 contribute to the active site. Residues 245 to 249 (QANLR) form an ACP-binding region. N274 is a catalytic residue.

Belongs to the thiolase-like superfamily. FabH family. In terms of assembly, homodimer.

It is found in the cytoplasm. It carries out the reaction malonyl-[ACP] + acetyl-CoA + H(+) = 3-oxobutanoyl-[ACP] + CO2 + CoA. Its pathway is lipid metabolism; fatty acid biosynthesis. Functionally, catalyzes the condensation reaction of fatty acid synthesis by the addition to an acyl acceptor of two carbons from malonyl-ACP. Catalyzes the first condensation reaction which initiates fatty acid synthesis and may therefore play a role in governing the total rate of fatty acid production. Possesses both acetoacetyl-ACP synthase and acetyl transacylase activities. Its substrate specificity determines the biosynthesis of branched-chain and/or straight-chain of fatty acids. In Shigella boydii serotype 4 (strain Sb227), this protein is Beta-ketoacyl-[acyl-carrier-protein] synthase III.